The sequence spans 368 residues: Phospho-N-acetylmuramoyl-pentapeptide-transferase (368 aa).

9 helical membrane passes run 30-50, 72-92, 98-118, 139-159, 170-190, 201-221, 238-258, 262-284, and 345-365; these read AAAI…IRFL, VPTM…LLWA, HVWL…IDDY, VALG…SVLL, FSVD…TAVS, GLAA…AYLG, AGEI…FLWF, PAEV…VIAL, and KIVI…LMTL.

Belongs to the glycosyltransferase 4 family. MraY subfamily. Requires Mg(2+) as cofactor.

It is found in the cell inner membrane. It carries out the reaction UDP-N-acetyl-alpha-D-muramoyl-L-alanyl-gamma-D-glutamyl-meso-2,6-diaminopimeloyl-D-alanyl-D-alanine + di-trans,octa-cis-undecaprenyl phosphate = di-trans,octa-cis-undecaprenyl diphospho-N-acetyl-alpha-D-muramoyl-L-alanyl-D-glutamyl-meso-2,6-diaminopimeloyl-D-alanyl-D-alanine + UMP. It participates in cell wall biogenesis; peptidoglycan biosynthesis. Its function is as follows. Catalyzes the initial step of the lipid cycle reactions in the biosynthesis of the cell wall peptidoglycan: transfers peptidoglycan precursor phospho-MurNAc-pentapeptide from UDP-MurNAc-pentapeptide onto the lipid carrier undecaprenyl phosphate, yielding undecaprenyl-pyrophosphoryl-MurNAc-pentapeptide, known as lipid I. This is Phospho-N-acetylmuramoyl-pentapeptide-transferase from Chlorobaculum parvum (strain DSM 263 / NCIMB 8327) (Chlorobium vibrioforme subsp. thiosulfatophilum).